A 578-amino-acid chain; its full sequence is Hyaluronan synthase 1 (578 aa).

Residues 1 to 25 are Cytoplasmic-facing; that stretch reads MRQQDAPKPTPAACRCSGLARRVLT. A helical transmembrane segment spans residues 26–46; that stretch reads IAFALLILGLMTWAYAAGVPL. At 47 to 52 the chain is on the extracellular side; the sequence is ASDRYG. The helical transmembrane segment at 53–73 threads the bilayer; that stretch reads LLAFGLYGAFLSAHLVAQSLF. Residues 74–399 are Cytoplasmic-facing; it reads AYLEHRRVAA…NALWWHRHHA (326 aa). The helical transmembrane segment at 400-420 threads the bilayer; sequence WMTYEAVVSGLFPFFVAATVL. The Extracellular segment spans residues 421–430; it reads RLFYAGRPWA. The chain crosses the membrane as a helical span at residues 431 to 451; the sequence is LLWVLLCVQGVALAKAAFAAW. Residues 452–457 lie on the Cytoplasmic side of the membrane; sequence LRGCLR. The chain crosses the membrane as a helical span at residues 458–478; that stretch reads MVLLSLYAPLYMCGLLPAKFL. Residues 479-497 lie on the Extracellular side of the membrane; that stretch reads ALVTMNQSGWGTSGRRKLA. A helical transmembrane segment spans residues 498–518; the sequence is ANYVPLLPLALWALLLLGGLV. Over 519-540 the chain is Cytoplasmic; sequence RSVAHEARADWSGPSRAAEAYH. Residues 541–561 traverse the membrane as a helical segment; the sequence is LAAGAGAYVGYWVAMLTLYWV. The Extracellular portion of the chain corresponds to 562 to 578; that stretch reads GVRRLCRRRTGGYRVQV.

The protein belongs to the NodC/HAS family. It depends on Mg(2+) as a cofactor. As to expression, widely expressed. Highly expressed in ovary followed by spleen, thymus, prostate, testes and large intestine. Weakly expressed in small intestine.

It is found in the membrane. It carries out the reaction [hyaluronan](n) + UDP-N-acetyl-alpha-D-glucosamine = N-acetyl-beta-D-glucosaminyl-(1-&gt;4)-[hyaluronan](n) + UDP + H(+). It catalyses the reaction N-acetyl-beta-D-glucosaminyl-(1-&gt;4)-[hyaluronan](n) + UDP-alpha-D-glucuronate = [hyaluronan](n+1) + UDP + H(+). It participates in glycan biosynthesis; hyaluronan biosynthesis. In terms of biological role, catalyzes the addition of GlcNAc or GlcUA monosaccharides to the nascent hyaluronan polymer. Therefore, it is essential to hyaluronan synthesis a major component of most extracellular matrices that has a structural role in tissues architectures and regulates cell adhesion, migration and differentiation. This is one of the isozymes catalyzing that reaction. Also able to catalyze the synthesis of chito-oligosaccharide depending on the substrate. This chain is Hyaluronan synthase 1 (HAS1), found in Homo sapiens (Human).